A 387-amino-acid polypeptide reads, in one-letter code: EARP-interacting protein homolog (387 aa).

WD repeat units lie at residues 132–172, 182–222, 226–266, 270–310, and 345–385; these read TAHG…SKAV, KGQL…QIYC, AHGQ…DPVK, EHSH…SEPF, and EHED…KYHI.

Belongs to the WD repeat EIPR1 family.

In Gekko japonicus (Schlegel's Japanese gecko), this protein is EARP-interacting protein homolog.